Here is a 395-residue protein sequence, read N- to C-terminus: S-adenosylmethionine synthase (395 aa).

His16 contacts ATP. A Mg(2+)-binding site is contributed by Asp18. A K(+)-binding site is contributed by Glu44. L-methionine contacts are provided by Glu57 and Gln100. The tract at residues 100 to 110 is flexible loop; the sequence is QSPDIAQGVDD. Residues 174–176, 241–242, Asp250, 256–257, Ala273, and Lys277 each bind ATP; these read DAK, RF, and RK. An L-methionine-binding site is contributed by Asp250. Lys281 contacts L-methionine.

The protein belongs to the AdoMet synthase family. Homotetramer; dimer of dimers. Mg(2+) serves as cofactor. The cofactor is K(+).

It localises to the cytoplasm. The catalysed reaction is L-methionine + ATP + H2O = S-adenosyl-L-methionine + phosphate + diphosphate. It functions in the pathway amino-acid biosynthesis; S-adenosyl-L-methionine biosynthesis; S-adenosyl-L-methionine from L-methionine: step 1/1. Functionally, catalyzes the formation of S-adenosylmethionine (AdoMet) from methionine and ATP. The overall synthetic reaction is composed of two sequential steps, AdoMet formation and the subsequent tripolyphosphate hydrolysis which occurs prior to release of AdoMet from the enzyme. In Levilactobacillus brevis (strain ATCC 367 / BCRC 12310 / CIP 105137 / JCM 1170 / LMG 11437 / NCIMB 947 / NCTC 947) (Lactobacillus brevis), this protein is S-adenosylmethionine synthase.